The chain runs to 122 residues: MPTINQLIRKKRKSTGKKRTAPALEKCPQRRGVCTRVSTTTPKKPNSALRKIARVRLTNGMEVTAYIPGIGHNLQEHSVVLVRGGRVKDLPGVRYQVVRGALDTAGVEDRAQGRSKYGTKKG.

Residues 1–24 (MPTINQLIRKKRKSTGKKRTAPAL) form a disordered region. The segment covering 8-20 (IRKKRKSTGKKRT) has biased composition (basic residues). The residue at position 89 (Asp-89) is a 3-methylthioaspartic acid.

The protein belongs to the universal ribosomal protein uS12 family. Part of the 30S ribosomal subunit. Contacts proteins S8 and S17. May interact with IF1 in the 30S initiation complex.

Its function is as follows. With S4 and S5 plays an important role in translational accuracy. Interacts with and stabilizes bases of the 16S rRNA that are involved in tRNA selection in the A site and with the mRNA backbone. Located at the interface of the 30S and 50S subunits, it traverses the body of the 30S subunit contacting proteins on the other side and probably holding the rRNA structure together. The combined cluster of proteins S8, S12 and S17 appears to hold together the shoulder and platform of the 30S subunit. The chain is Small ribosomal subunit protein uS12 from Natranaerobius thermophilus (strain ATCC BAA-1301 / DSM 18059 / JW/NM-WN-LF).